The primary structure comprises 256 residues: 3-hydroxy-5-phosphonooxypentane-2,4-dione thiolase (256 aa).

Lysine 168 (schiff-base intermediate with substrate) is an active-site residue.

The protein belongs to the DeoC/FbaB aldolase family. Homodecamer.

Its subcellular location is the cytoplasm. The catalysed reaction is dihydroxyacetone phosphate + acetyl-CoA = 3-hydroxy-2,4-dioxopentyl phosphate + CoA. In terms of biological role, involved in the degradation of phospho-AI-2, thereby terminating induction of the lsr operon and closing the AI-2 signaling cycle. Catalyzes the transfer of an acetyl moiety from 3-hydroxy-5-phosphonooxypentane-2,4-dione to CoA to form glycerone phosphate and acetyl-CoA. The polypeptide is 3-hydroxy-5-phosphonooxypentane-2,4-dione thiolase (lsrF) (Shigella flexneri serotype 5b (strain 8401)).